Here is an 897-residue protein sequence, read N- to C-terminus: 3'-5' exonuclease DinG (897 aa).

The Exonuclease domain maps to 8-161 (VVDLETTGNQ…DEDAATTAKL (154 aa)). A Helicase ATP-binding domain is found at 241 to 496 (SKAVDQLGLT…KAIDQLEKQR (256 aa)). 276-283 (ASLGSGKS) serves as a coordination point for ATP. The short motif at 448-451 (DEAH) is the DEAH box element. A Helicase C-terminal domain is found at 703–893 (NIDEYVASIV…QFGKLLRQIQ (191 aa)).

This sequence belongs to the helicase family. DinG subfamily. Type 2 sub-subfamily.

In terms of biological role, 3'-5' exonuclease. The sequence is that of 3'-5' exonuclease DinG from Staphylococcus aureus (strain MSSA476).